The sequence spans 175 residues: Small ribosomal subunit protein mS38 (175 aa).

It belongs to the mitochondrion-specific ribosomal protein mS38 family. Component of the mitochondrial small ribosomal subunit (mt-SSU). Mature yeast 74S mitochondrial ribosomes consist of a small (37S) and a large (54S) subunit. The 37S small subunit contains a 15S ribosomal RNA (15S mt-rRNA) and at least 32 different proteins. The 54S large subunit contains a 21S rRNA (21S mt-rRNA) and at least 45 different proteins.

It is found in the mitochondrion. The protein localises to the mitochondrion inner membrane. Component of the mitochondrial ribosome (mitoribosome), a dedicated translation machinery responsible for the synthesis of mitochondrial genome-encoded proteins, including at least some of the essential transmembrane subunits of the mitochondrial respiratory chain. The mitoribosomes are attached to the mitochondrial inner membrane and translation products are cotranslationally integrated into the membrane. mS38 is also involved in the splicing of the COX1 mRNA. This chain is Small ribosomal subunit protein mS38 (cox24), found in Schizosaccharomyces pombe (strain 972 / ATCC 24843) (Fission yeast).